The primary structure comprises 77 residues: Acyl carrier protein (77 aa).

One can recognise a Carrier domain in the interval 2-77; sequence SSIDKRIKEI…DAIDYITDHT (76 aa). Serine 37 is subject to O-(pantetheine 4'-phosphoryl)serine.

The protein belongs to the acyl carrier protein (ACP) family. Post-translationally, 4'-phosphopantetheine is transferred from CoA to a specific serine of apo-ACP by AcpS. This modification is essential for activity because fatty acids are bound in thioester linkage to the sulfhydryl of the prosthetic group.

The protein localises to the cytoplasm. It participates in lipid metabolism; fatty acid biosynthesis. Carrier of the growing fatty acid chain in fatty acid biosynthesis. In Geotalea daltonii (strain DSM 22248 / JCM 15807 / FRC-32) (Geobacter daltonii), this protein is Acyl carrier protein.